A 193-amino-acid chain; its full sequence is 21 kDa protein (193 aa).

An N-terminal signal peptide occupies residues 1–22 (MKLSKSTLVFSALLVILAAASA).

The polypeptide is 21 kDa protein (Daucus carota (Wild carrot)).